Consider the following 322-residue polypeptide: MNNAIVLNNVNTNLFKKDIINNFVNNLTKSTCSTIANMLAIDYTLRLNSKPEAEKYIKKCVTRLKSYLGMRVINDDNFSVALELFAIMITYEYENEQNKDNILEQSQNVIAANLVEVYFSDAKITSSEKEKIKNIFKTLLKEKNFDKIINYAESHKKLFKMSVMYAMQKYNNIDQATIYIKKEFNKILDMSLAFTQKCNIFKQTTGKIVGAVCALLVGAISVATAGAAFSIIIVPTLIFAIRYAPALGEKIGEFILNNDNVIKLEQSNIDEFMKTLQNNKENLLSQEKVKKIKNNITVVPPTINSKLIKKVVNNKKNIDRIY.

A helical membrane pass occupies residues 212 to 234 (VCALLVGAISVATAGAAFSIIIV).

The protein resides in the membrane. This is an uncharacterized protein from Rickettsia prowazekii (strain Madrid E).